A 336-amino-acid polypeptide reads, in one-letter code: Dihydroorotate dehydrogenase (quinone) (336 aa).

FMN is bound by residues 62 to 66 (AGLDK) and T86. K66 contacts substrate. Position 111–115 (111–115 (NRMGF)) interacts with substrate. FMN is bound by residues N139 and N172. N172 lines the substrate pocket. Catalysis depends on S175, which acts as the Nucleophile. Position 177 (N177) interacts with substrate. The FMN site is built by K217 and T245. 246 to 247 (NT) provides a ligand contact to substrate. Residues G268, G297, and 318 to 319 (YS) each bind FMN.

It belongs to the dihydroorotate dehydrogenase family. Type 2 subfamily. As to quaternary structure, monomer. It depends on FMN as a cofactor.

The protein resides in the cell membrane. It carries out the reaction (S)-dihydroorotate + a quinone = orotate + a quinol. The protein operates within pyrimidine metabolism; UMP biosynthesis via de novo pathway; orotate from (S)-dihydroorotate (quinone route): step 1/1. Functionally, catalyzes the conversion of dihydroorotate to orotate with quinone as electron acceptor. This Salmonella typhi protein is Dihydroorotate dehydrogenase (quinone).